Consider the following 573-residue polypeptide: Phosphoenolpyruvate-protein phosphotransferase (573 aa).

H190 functions as the Tele-phosphohistidine intermediate in the catalytic mechanism. Residues R297 and R333 each contribute to the substrate site. Mg(2+) is bound by residues E432 and D456. Residue 455–456 (ND) participates in phosphoenolpyruvate binding. Residue R466 coordinates substrate. Catalysis depends on C503, which acts as the Proton donor.

Belongs to the PEP-utilizing enzyme family. Homodimer. Mg(2+) serves as cofactor.

The protein resides in the cytoplasm. It carries out the reaction L-histidyl-[protein] + phosphoenolpyruvate = N(pros)-phospho-L-histidyl-[protein] + pyruvate. General (non sugar-specific) component of the phosphoenolpyruvate-dependent sugar phosphotransferase system (sugar PTS). This major carbohydrate active-transport system catalyzes the phosphorylation of incoming sugar substrates concomitantly with their translocation across the cell membrane. Enzyme I transfers the phosphoryl group from phosphoenolpyruvate (PEP) to the phosphoryl carrier protein (HPr). The polypeptide is Phosphoenolpyruvate-protein phosphotransferase (ptsI) (Staphylococcus carnosus (strain TM300)).